The primary structure comprises 302 residues: Gigasin-6 (302 aa).

Residues 1–22 form the signal peptide; sequence MSSRNLLYSSVVLFLVLFYCHG. The helical transmembrane segment at 75–95 threads the bilayer; the sequence is ITTDTLFGLGGISALFANILI.

As to expression, component of the organic matrix of calcified shell layers.

It localises to the membrane. This is Gigasin-6 from Magallana gigas (Pacific oyster).